The sequence spans 149 residues: Calmodulin-2 (149 aa).

An N-acetylalanine modification is found at Ala-2. 4 consecutive EF-hand domains span residues 8 to 43, 44 to 79, 81 to 116, and 117 to 149; these read EQIAEFKEAFSLFDKDGDGTITTKELGTVMRSLGQN, PTEAELQDMINEVDADGNGTIDFPEFLTMMARKMKD, DSEEEIREAFRVFDKDGNGFISAAELRHVMTNLGEK, and LTDEEVDEMVREADIDGDGQVNYEEFVEMMTSK. The Ca(2+) site is built by Asp-21, Asp-23, Asp-25, Thr-27, Glu-32, Asp-57, Asp-59, Asn-61, Thr-63, Glu-68, Asp-94, Asp-96, Asn-98, and Glu-105. Lys-116 is subject to N6,N6,N6-trimethyllysine. Asp-130, Asp-132, Asp-134, Gln-136, and Glu-141 together coordinate Ca(2+).

It belongs to the calmodulin family.

Calmodulin mediates the control of a large number of enzymes, ion channels and other proteins by Ca(2+). Among the enzymes to be stimulated by the calmodulin-Ca(2+) complex are a number of protein kinases and phosphatases. This is Calmodulin-2 (CAM2) from Branchiostoma lanceolatum (Common lancelet).